We begin with the raw amino-acid sequence, 482 residues long: MKFTTYTTFPEQTSNESLWILVDSEQLQSNLNTYQINNLESILTATQFKANFNETLPLFGQLSTQPHSQLLGLGKAAELQAAKLAKLAQTIIKSAQNKFKHIAIDIAALPVEYHYLFALSLTQAAYGYDEFKSTKNEFVLQQVDLISSQTSLDENQLALVHAVQSGQSYARDLGNRPGNICFPEYLAEQALALAAEFPDLLKVTVLNEQQMADLGMYAFLAVSKGSERPGRIVTLEYQAQLEQAPVVLVGKGVTFDTGGISLKPGLGMDEMKFDMCGAASVLGTIRALCEARLPIHVVGAIAAAENMPSGKATRPGDIVTTMSGQTVEILNTDAEGRLVLCDTLTYIKRFNPAVVIDIATLTGACVVALGKVLSGLFSPDDTLAAELQQAGEQSFDRVWRMPVIDDYQELLDSPFADIANIGGPHGGAITAACFLERFTRDYRWAHLDVAGTAWLSGSAKGATGRPVPLLMQFLANRVSTNG.

Mn(2+) is bound by residues lysine 251 and aspartate 256. Residue lysine 263 is part of the active site. Mn(2+)-binding residues include aspartate 274, aspartate 333, and glutamate 335. Residue arginine 337 is part of the active site.

This sequence belongs to the peptidase M17 family. Mn(2+) is required as a cofactor.

Its subcellular location is the cytoplasm. The enzyme catalyses Release of an N-terminal amino acid, Xaa-|-Yaa-, in which Xaa is preferably Leu, but may be other amino acids including Pro although not Arg or Lys, and Yaa may be Pro. Amino acid amides and methyl esters are also readily hydrolyzed, but rates on arylamides are exceedingly low.. It catalyses the reaction Release of an N-terminal amino acid, preferentially leucine, but not glutamic or aspartic acids.. Presumably involved in the processing and regular turnover of intracellular proteins. Catalyzes the removal of unsubstituted N-terminal amino acids from various peptides. The polypeptide is Probable cytosol aminopeptidase (Acinetobacter baumannii (strain SDF)).